The sequence spans 165 residues: Ribosome maturation factor RimM (165 aa).

The region spanning 90-161 is the PRC barrel domain; the sequence is PDTYYVSDLK…KIIIKPVGEW (72 aa).

The protein belongs to the RimM family. In terms of assembly, binds ribosomal protein uS19.

Its subcellular location is the cytoplasm. Functionally, an accessory protein needed during the final step in the assembly of 30S ribosomal subunit, possibly for assembly of the head region. Essential for efficient processing of 16S rRNA. May be needed both before and after RbfA during the maturation of 16S rRNA. It has affinity for free ribosomal 30S subunits but not for 70S ribosomes. The chain is Ribosome maturation factor RimM from Clostridium beijerinckii (strain ATCC 51743 / NCIMB 8052) (Clostridium acetobutylicum).